The sequence spans 802 residues: Lon protease (802 aa).

Residues 21–215 enclose the Lon N-terminal domain; it reads LPLLPVRDII…KIIQILNAEI (195 aa). 367–374 provides a ligand contact to ATP; sequence GPPGVGKT. One can recognise a Lon proteolytic domain in the interval 603-784; sequence ENDVGVATGL…DEVISLTIER (182 aa). Catalysis depends on residues Ser690 and Lys733.

Belongs to the peptidase S16 family. Homohexamer. Organized in a ring with a central cavity.

The protein resides in the cytoplasm. The enzyme catalyses Hydrolysis of proteins in presence of ATP.. ATP-dependent serine protease that mediates the selective degradation of mutant and abnormal proteins as well as certain short-lived regulatory proteins. Required for cellular homeostasis and for survival from DNA damage and developmental changes induced by stress. Degrades polypeptides processively to yield small peptide fragments that are 5 to 10 amino acids long. Binds to DNA in a double-stranded, site-specific manner. The sequence is that of Lon protease from Endomicrobium trichonymphae.